The chain runs to 163 residues: MSKPPRRSPRKPTPASPELQLGHEVVWPTSPDAARLDRVANPQRDTDYLARFTAPEFTSLCPVTGQPDFAHLVIDYAPGAWLLESKSLKLYLASFRSHGAFHEDCTVGIGKRIAAEIKPKWLRIGGYWYPRGGIPIDVFWQTGKLPKGLWVPDQGVRPYRGRG.

Positions 1-10 are enriched in basic residues; the sequence is MSKPPRRSPR. Residues 1–23 are disordered; it reads MSKPPRRSPRKPTPASPELQLGH. C61 (thioimide intermediate) is an active-site residue. Catalysis depends on D68, which acts as the Proton donor. Substrate contacts are provided by residues 83-85 and 102-103; these read LES and HE.

It belongs to the GTP cyclohydrolase I family. QueF type 1 subfamily.

It is found in the cytoplasm. It carries out the reaction 7-aminomethyl-7-carbaguanine + 2 NADP(+) = 7-cyano-7-deazaguanine + 2 NADPH + 3 H(+). It participates in tRNA modification; tRNA-queuosine biosynthesis. In terms of biological role, catalyzes the NADPH-dependent reduction of 7-cyano-7-deazaguanine (preQ0) to 7-aminomethyl-7-deazaguanine (preQ1). This Rhodopseudomonas palustris (strain BisA53) protein is NADPH-dependent 7-cyano-7-deazaguanine reductase.